The chain runs to 356 residues: MKLSRIALATMLVAAPLAAANAGVTVTPLLLGYTFQDSQHNNGGKDGNLTNGPELQDDLFVGAALGIELTPWLGFEAEYNQVKGDVDGASAGAEYKQKQINGNFYVTSDLITKNYDSKIKPYVLLGAGHYKYDFDGVNRGTRGTSEEGTLGNAGVGAFWRLNDALSLRTEARATYNADEEFWNYTALAGLNVVLGGHLKPAAPVVEVAPVEPTPVAPQPQELTEDLNMELRVFFDTNKSNIKDQYKPEIAKVAEKLSEYPNATARIEGHTDNTGPRKLNERLSLARANSVKSALVNEYNVDASRLSTQGFAWDQPIADNKTKEGRAMNRRVFATITGSRTVVVQPGQEAAAPAAAQ.

An N-terminal signal peptide occupies residues 1 to 19 (MKLSRIALATMLVAAPLAA). Residues 221–339 (ELTEDLNMEL…RVFATITGSR (119 aa)) enclose the OmpA-like domain. Residues asparagine 237, aspartate 271, threonine 273, asparagine 279, and arginine 286 each contribute to the meso-2,6-diaminopimelate site.

Belongs to the outer membrane OOP (TC 1.B.6) superfamily. In terms of assembly, homotrimer. Forms a pore with a size of 1.3 nm.

It is found in the cell outer membrane. The protein localises to the host mitochondrion. Its function is as follows. Functions as a porin. Induces apoptosis in human cell lines through caspase-dependent and AIF-dependent pathways. Purified Omp38 enters host cell and localizes to the mitochondria, which presumably leads to a release of proapoptotic molecules such as cytochrome c and AIF (apoptosis-inducing factor). Binds peptidoglycan, contributes to cell wall maintenance. The chain is Outer membrane protein Omp38 from Acinetobacter baumannii (strain ATCC 19606 / DSM 30007 / JCM 6841 / CCUG 19606 / CIP 70.34 / NBRC 109757 / NCIMB 12457 / NCTC 12156 / 81).